The chain runs to 683 residues: Multidrug resistance protein MdtO (683 aa).

Transmembrane regions (helical) follow at residues 43 to 63, 75 to 95, 100 to 120, 125 to 145, 158 to 178, 402 to 422, 426 to 446, 457 to 477, and 483 to 503; these read VILISMTFEIPFVALSLAVLF, FVAILFVVATVLEIASLFLIY, GEPLIRLIIAGPILMSCMFLM, LGLVFFAVAIVAIYGQTFPAM, WCIVVGLYPTLLMTLIGVLWF, FGGAFCGAILALLFTLLVMPW, IVELLFVLAPIFLLGAWIATS, MVVTFALATLENVFGPVYDLV, and ALGIIIGTVVSAVIYTFVWPE.

The protein belongs to the MdtO family. As to quaternary structure, could be part of a tripartite efflux system composed of MdtN, MdtO and MdtP.

It localises to the cell inner membrane. Functionally, could be involved in resistance to puromycin, acriflavine and tetraphenylarsonium chloride. In Escherichia coli O6:H1 (strain CFT073 / ATCC 700928 / UPEC), this protein is Multidrug resistance protein MdtO (mdtO).